We begin with the raw amino-acid sequence, 109 residues long: Nucleoid-associated protein APL_0075 (109 aa).

The interval 1–21 (MFGKGGLGGLMKQAQQMQERM) is disordered. Residues 10-19 (LMKQAQQMQE) are compositionally biased toward low complexity.

The protein belongs to the YbaB/EbfC family. In terms of assembly, homodimer.

The protein localises to the cytoplasm. The protein resides in the nucleoid. Its function is as follows. Binds to DNA and alters its conformation. May be involved in regulation of gene expression, nucleoid organization and DNA protection. The chain is Nucleoid-associated protein APL_0075 from Actinobacillus pleuropneumoniae serotype 5b (strain L20).